The chain runs to 187 residues: Ribosome-recycling factor (187 aa).

Belongs to the RRF family.

It localises to the cytoplasm. Responsible for the release of ribosomes from messenger RNA at the termination of protein biosynthesis. May increase the efficiency of translation by recycling ribosomes from one round of translation to another. In Mycoplasmopsis pulmonis (strain UAB CTIP) (Mycoplasma pulmonis), this protein is Ribosome-recycling factor.